A 406-amino-acid chain; its full sequence is Dihydroorotase, mitochondrial (406 aa).

Residues 1 to 41 (MQTAATSTFFANPHVKHLPGPFLRPSPHYGALVHLPSFRNK) constitute a mitochondrion transit peptide. 6 residues coordinate Zn(2+): histidine 69, histidine 71, lysine 155, histidine 193, histidine 231, and aspartate 305. Residue lysine 155 is modified to N6-carboxylysine.

This sequence belongs to the metallo-dependent hydrolases superfamily. DHOase family. Class II DHOase subfamily. Zn(2+) serves as cofactor.

The protein resides in the mitochondrion. It carries out the reaction (S)-dihydroorotate + H2O = N-carbamoyl-L-aspartate + H(+). It functions in the pathway pyrimidine metabolism; UMP biosynthesis via de novo pathway; (S)-dihydroorotate from bicarbonate: step 3/3. The sequence is that of Dihydroorotase, mitochondrial (PYRC) from Oryza sativa subsp. japonica (Rice).